We begin with the raw amino-acid sequence, 288 residues long: Nucleotide-binding protein Neut_1559 (288 aa).

Position 8-15 (8-15) interacts with ATP; sequence GLSGSGKS. 57 to 60 lines the GTP pocket; it reads DMRS.

It belongs to the RapZ-like family.

In terms of biological role, displays ATPase and GTPase activities. This Nitrosomonas eutropha (strain DSM 101675 / C91 / Nm57) protein is Nucleotide-binding protein Neut_1559.